We begin with the raw amino-acid sequence, 1132 residues long: Telomerase reverse transcriptase (1132 aa).

The tract at residues 1–230 (MPRAPRCRAV…ARRRGGSASR (230 aa)) is RNA-interacting domain 1. Residues 58–197 (VPWDARPPPA…PHASGPRRRL (140 aa)) form a GQ motif region. The required for regulating specificity for telomeric DNA and for processivity for primer elongation stretch occupies residues 137–141 (WGLLL). The tract at residues 210–320 (AGVPLGLPAP…SRPPRPWDTP (111 aa)) is disordered. The segment covering 213-234 (PLGLPAPGARRRGGSASRSLPL) has biased composition (low complexity). Positions 222–240 (RRRGGSASRSLPLPKRPRR) match the Bipartite nuclear localization signal motif. A Phosphoserine; by PKB/AKT1 modification is found at Ser-227. Residues 231 to 324 (SLPLPKRPRR…RPWDTPCPPV (94 aa)) are linker. Residues 293-304 (RHSHPSVGRQHH) show a composition bias toward basic residues. The segment at 301-538 (RQHHAGPPST…VPAAEHRLRE (238 aa)) is required for oligomerization. Residues 310-320 (TSRPPRPWDTP) show a composition bias toward pro residues. Residues 325–550 (YAETKHFLYS…LAKFLHWLMS (226 aa)) form an RNA-interacting domain 2 region. The TFLY; involved in RNA binding motif lies at 328-333 (TKHFLY). The QFP motif stretch occupies residues 376 to 521 (PRRLPRLPQR…MSVRDCAWLR (146 aa)). The tract at residues 397–417 (LGNHAQCPYGVLLKTHCPLRA) is CP motif. Ser-457 is subject to Phosphoserine; by DYRK2. Residues 605–935 (EVRQHREARP…GLFPWCGLLL (331 aa)) enclose the Reverse transcriptase domain. Phosphotyrosine; by SRC-type Tyr-kinases is present on Tyr-707. 3 residues coordinate Mg(2+): Asp-712, Asp-868, and Asp-869. The required for oligomerization stretch occupies residues 914 to 928 (LGGTAFVQMPAHGLF). The segment at 930–934 (WCGLL) is primer grip sequence. Residues 936-1132 (DTRTLEVQSD…LPSDFKTILD (197 aa)) form a CTE region.

Belongs to the reverse transcriptase family. Telomerase subfamily. As to quaternary structure, catalytic component of the telomerase holoenzyme complex composed of one molecule of TERT, one molecule of WRAP53/TCAB1, two molecules of H/ACA ribonucleoprotein complex subunits DKC1, NOP10, NHP2 and GAR1, and a telomerase RNA template component (TERC). The telomerase holoenzyme complex is associated with TEP1, SMG6/EST1A and POT1. The molecular chaperone HSP90/P23 complex is required for correct assembly and stabilization of the active telomerase. Interacts directly with HSP90A and PTGES3. Interacts with HSPA1A; the interaction occurs in the absence of TERC and dissociates once the complex has formed. Interacts with RAN; the interaction promotes nuclear export of TERT. Interacts with XPO1. Interacts with PTPN11; the interaction retains TERT in the nucleus. Interacts with NCL (via RRM1 and C-terminal RRM4/Arg/Gly-rich domains); the interaction is important for nucleolar localization of TERT. Interacts with SMARCA4 (via the bromodomain); the interaction regulates Wnt-mediated signaling. Interacts with MCRS1 (isoform MCRS2); the interaction inhibits in vitro telomerase activity. Interacts with PIF1; the interaction has no effect on the elongation activity of TERT. Interacts with PML; the interaction recruits TERT to PML bodies and inhibits telomerase activity. Interacts with GNL3L. Interacts with isoform 1 and isoform 2 of NVL. Interacts with DHX36. Interacts with ATF7. Post-translationally, phosphorylation at Tyr-707 under oxidative stress leads to translocation of TERT to the cytoplasm and reduces its antiapoptotic activity. Dephosphorylated by SHP2/PTPN11 leading to nuclear retention. Phosphorylation at Ser-227 by the AKT pathway promotes nuclear location. Phosphorylation at the G2/M phase at Ser-457 by DYRK2 promotes ubiquitination by the EDVP complex and degradation. Ubiquitinated by the EDVP complex, a E3 ligase complex following phosphorylation at Ser-457 by DYRK2. Ubiquitinated leads to proteasomal degradation. In terms of processing, (Microbial infection) In case of infection by HIV-1, the EDVP complex is hijacked by HIV-1 via interaction between HIV-1 Vpr and DCAF1/VPRBP, leading to ubiquitination and degradation. In terms of tissue distribution, expressed at a high level in thymocyte subpopulations, at an intermediate level in tonsil T-lymphocytes, and at a low to undetectable level in peripheral blood T-lymphocytes.

The protein resides in the nucleus. It localises to the nucleolus. The protein localises to the nucleoplasm. Its subcellular location is the chromosome. It is found in the telomere. The protein resides in the cytoplasm. It localises to the PML body. It carries out the reaction DNA(n) + a 2'-deoxyribonucleoside 5'-triphosphate = DNA(n+1) + diphosphate. Its function is as follows. Telomerase is a ribonucleoprotein enzyme essential for the replication of chromosome termini in most eukaryotes. Active in progenitor and cancer cells. Inactive, or very low activity, in normal somatic cells. Catalytic component of the teleromerase holoenzyme complex whose main activity is the elongation of telomeres by acting as a reverse transcriptase that adds simple sequence repeats to chromosome ends by copying a template sequence within the RNA component of the enzyme. Catalyzes the RNA-dependent extension of 3'-chromosomal termini with the 6-nucleotide telomeric repeat unit, 5'-TTAGGG-3'. The catalytic cycle involves primer binding, primer extension and release of product once the template boundary has been reached or nascent product translocation followed by further extension. More active on substrates containing 2 or 3 telomeric repeats. Telomerase activity is regulated by a number of factors including telomerase complex-associated proteins, chaperones and polypeptide modifiers. Modulates Wnt signaling. Plays important roles in aging and antiapoptosis. The chain is Telomerase reverse transcriptase (TERT) from Homo sapiens (Human).